A 63-amino-acid chain; its full sequence is Large ribosomal subunit protein bL28 (63 aa).

It belongs to the bacterial ribosomal protein bL28 family.

The chain is Large ribosomal subunit protein bL28 from Clostridium perfringens (strain ATCC 13124 / DSM 756 / JCM 1290 / NCIMB 6125 / NCTC 8237 / Type A).